The chain runs to 757 residues: Maltose phosphorylase (757 aa).

354 to 355 is a substrate binding site; it reads WD. Catalysis depends on Glu-483, which acts as the Proton donor. Residue 588–589 participates in substrate binding; that stretch reads KQ.

Belongs to the glycosyl hydrolase 65 family.

The catalysed reaction is D-maltose + phosphate = beta-D-glucose 1-phosphate + D-glucose. The protein operates within glycan degradation; maltose degradation. In terms of biological role, catalyzes the phosphorolysis of maltose, leading to the formation of glucose and glucose 1-P. This is Maltose phosphorylase (mdxK) from Bacillus subtilis (strain 168).